Reading from the N-terminus, the 430-residue chain is Histidine--tRNA ligase (430 aa).

The protein belongs to the class-II aminoacyl-tRNA synthetase family. As to quaternary structure, homodimer.

It is found in the cytoplasm. The enzyme catalyses tRNA(His) + L-histidine + ATP = L-histidyl-tRNA(His) + AMP + diphosphate + H(+). The chain is Histidine--tRNA ligase from Acinetobacter baumannii (strain AB307-0294).